Reading from the N-terminus, the 1041-residue chain is Isoleucine--tRNA ligase (1041 aa).

Residues 53–63 (PFANGLPHYGH) carry the 'HIGH' region motif. Positions 619 to 623 (KMSKS) match the 'KMSKS' region motif. Lys622 is a binding site for ATP.

It belongs to the class-I aminoacyl-tRNA synthetase family. IleS type 2 subfamily. Monomer. The cofactor is Zn(2+).

It localises to the cytoplasm. The enzyme catalyses tRNA(Ile) + L-isoleucine + ATP = L-isoleucyl-tRNA(Ile) + AMP + diphosphate. Its function is as follows. Catalyzes the attachment of isoleucine to tRNA(Ile). As IleRS can inadvertently accommodate and process structurally similar amino acids such as valine, to avoid such errors it has two additional distinct tRNA(Ile)-dependent editing activities. One activity is designated as 'pretransfer' editing and involves the hydrolysis of activated Val-AMP. The other activity is designated 'posttransfer' editing and involves deacylation of mischarged Val-tRNA(Ile). This is Isoleucine--tRNA ligase (ileS) from Mycobacterium tuberculosis (strain CDC 1551 / Oshkosh).